A 791-amino-acid polypeptide reads, in one-letter code: Endonuclease MutS2 (791 aa).

Residue glycine 337–threonine 344 participates in ATP binding. Residues alanine 689–glutamate 715 form a disordered region. Low complexity predominate over residues serine 703–serine 713. Residues leucine 716 to glutamine 791 enclose the Smr domain.

Belongs to the DNA mismatch repair MutS family. MutS2 subfamily. Homodimer. Binds to stalled ribosomes, contacting rRNA.

Functionally, endonuclease that is involved in the suppression of homologous recombination and thus may have a key role in the control of bacterial genetic diversity. Acts as a ribosome collision sensor, splitting the ribosome into its 2 subunits. Detects stalled/collided 70S ribosomes which it binds and splits by an ATP-hydrolysis driven conformational change. Acts upstream of the ribosome quality control system (RQC), a ribosome-associated complex that mediates the extraction of incompletely synthesized nascent chains from stalled ribosomes and their subsequent degradation. Probably generates substrates for RQC. The protein is Endonuclease MutS2 of Lactobacillus gasseri (strain ATCC 33323 / DSM 20243 / BCRC 14619 / CIP 102991 / JCM 1131 / KCTC 3163 / NCIMB 11718 / NCTC 13722 / AM63).